A 327-amino-acid polypeptide reads, in one-letter code: Zinc transport protein ZntB (327 aa).

At 1–273 (MEAIKGSDVN…ARRTYTMSLM (273 aa)) the chain is on the cytoplasmic side. Residues 274–294 (AMVFLPSTFLTGLFGVNLGGI) form a helical membrane-spanning segment. Residues 295 to 300 (PGGGWQ) lie on the Periplasmic side of the membrane. A helical transmembrane segment spans residues 301 to 321 (FGFSIFCILLVVLIGGVALWL). Residues 322 to 327 (HRSKWL) lie on the Cytoplasmic side of the membrane.

The protein belongs to the CorA metal ion transporter (MIT) (TC 1.A.35) family.

It localises to the cell inner membrane. The catalysed reaction is Zn(2+)(out) + H(+)(out) = Zn(2+)(in) + H(+)(in). Zinc transporter. Acts as a Zn(2+):proton symporter, which likely mediates zinc ion uptake. The sequence is that of Zinc transport protein ZntB from Escherichia coli O139:H28 (strain E24377A / ETEC).